A 262-amino-acid polypeptide reads, in one-letter code: ATP synthase subunit a (262 aa).

The next 7 membrane-spanning stretches (helical) occupy residues 30–50, 64–84, 91–111, 123–143, 149–169, 195–215, and 220–240; these read ITSL…LTIF, WNIV…DQIG, LIYF…NILG, ISVT…IGFS, FFSL…LVLI, LFGV…SLLL, and ITLP…VALL.

This sequence belongs to the ATPase A chain family. F-type ATPases have 2 components, CF(1) - the catalytic core - and CF(0) - the membrane proton channel. CF(1) has five subunits: alpha(3), beta(3), gamma(1), delta(1), epsilon(1). CF(0) has three main subunits: a, b and c.

It localises to the mitochondrion inner membrane. Mitochondrial membrane ATP synthase (F(1)F(0) ATP synthase or Complex V) produces ATP from ADP in the presence of a proton gradient across the membrane which is generated by electron transport complexes of the respiratory chain. F-type ATPases consist of two structural domains, F(1) - containing the extramembraneous catalytic core and F(0) - containing the membrane proton channel, linked together by a central stalk and a peripheral stalk. During catalysis, ATP synthesis in the catalytic domain of F(1) is coupled via a rotary mechanism of the central stalk subunits to proton translocation. Key component of the proton channel; it may play a direct role in the translocation of protons across the membrane. This chain is ATP synthase subunit a (ATP6), found in Allomyces macrogynus.